A 552-amino-acid polypeptide reads, in one-letter code: Steroid transmembrane transporter SLC22A24 (552 aa).

Helical transmembrane passes span 16 to 36 (FQIL…PHIL), 146 to 166 (SVVQ…FGYL), 174 to 194 (MICS…AFAP), 204 to 224 (FLAG…VIEW), 235 to 255 (TLLL…AFVI), 260 to 280 (TLQL…RWLV), 349 to 369 (IVLY…GLIF), 380 to 400 (LFQV…LLVM), 407 to 427 (ISQV…TFLD), 436 to 456 (ILAT…SVHF), 473 to 493 (ILFS…VGFS), and 495 to 515 (YLPW…VLLL).

Belongs to the major facilitator (TC 2.A.1) superfamily. Organic cation transporter (TC 2.A.1.19) family.

The protein localises to the cell membrane. It carries out the reaction estrone 3-sulfate(out) + glutarate(in) = estrone 3-sulfate(in) + glutarate(out). The catalysed reaction is 17beta-estradiol 17-O-(beta-D-glucuronate)(out) + glutarate(in) = 17beta-estradiol 17-O-(beta-D-glucuronate)(in) + glutarate(out). The enzyme catalyses 5alpha-androstane-3alpha,17beta-diol 3-O-(beta-D-glucuronate)(out) + glutarate(in) = 5alpha-androstane-3alpha,17beta-diol 3-O-(beta-D-glucuronate)(in) + glutarate(out). It catalyses the reaction dehydroepiandrosterone 3-sulfate(out) + glutarate(in) = dehydroepiandrosterone 3-sulfate(in) + glutarate(out). It carries out the reaction glutarate(in) + succinate(out) = glutarate(out) + succinate(in). Its function is as follows. Renal transmembrane organic anion/dicarboxylate exchanger that participates in the reabsorption of conjugated steroids, as well as bile acids, driven by an outward gradient of dicarboxylates such as glutarate or succinate. Transports androstanediol glucuronide (5alpha-androstane-3alpha,17beta-diol 3-O-(beta-D-glucuronate)), estrone 3-sulfate, and estradiol-17-glucuronide (17beta-estradiol 17-O-(beta-D-glucuronate)), but not taurocholate. In Microcebus murinus (Gray mouse lemur), this protein is Steroid transmembrane transporter SLC22A24.